Here is a 36-residue protein sequence, read N- to C-terminus: Potassium channel toxin alpha-KTx 16.9 (36 aa).

3 cysteine pairs are disulfide-bonded: C7-C28, C13-C33, and C17-C35.

The protein belongs to the short scorpion toxin superfamily. Potassium channel inhibitor family. Alpha-KTx 16 subfamily. Expressed by the venom gland.

The protein localises to the secreted. Poorly competes with (125)I-kaliotoxin binding on rat brain synaptosome (IC(50)&gt;100 nM). Is a poor Kv1.3/KCNA3 ligand. May have as real target KCa1.1/KCNMA1 channel. Shows weak toxicity on mice. The protein is Potassium channel toxin alpha-KTx 16.9 of Buthus paris (Scorpion).